Reading from the N-terminus, the 138-residue chain is UPF0355 protein SSP2326 (138 aa).

The interval 115–138 (NVAFETNQTKSNSHYSEETNGPKS) is disordered. The span at 118 to 138 (FETNQTKSNSHYSEETNGPKS) shows a compositional bias: polar residues.

It belongs to the UPF0355 family.

This is UPF0355 protein SSP2326 from Staphylococcus saprophyticus subsp. saprophyticus (strain ATCC 15305 / DSM 20229 / NCIMB 8711 / NCTC 7292 / S-41).